An 875-amino-acid polypeptide reads, in one-letter code: Alanine--tRNA ligase (875 aa).

Zn(2+)-binding residues include His565, His569, Cys666, and His670.

The protein belongs to the class-II aminoacyl-tRNA synthetase family. The cofactor is Zn(2+).

The protein localises to the cytoplasm. It catalyses the reaction tRNA(Ala) + L-alanine + ATP = L-alanyl-tRNA(Ala) + AMP + diphosphate. Functionally, catalyzes the attachment of alanine to tRNA(Ala) in a two-step reaction: alanine is first activated by ATP to form Ala-AMP and then transferred to the acceptor end of tRNA(Ala). Also edits incorrectly charged Ser-tRNA(Ala) and Gly-tRNA(Ala) via its editing domain. This is Alanine--tRNA ligase from Leptothrix cholodnii (strain ATCC 51168 / LMG 8142 / SP-6) (Leptothrix discophora (strain SP-6)).